The primary structure comprises 260 residues: Eukaryotic translation initiation factor 3 subunit G-2 (260 aa).

The RRM domain maps to 180–258 (CAVRISNLSE…LILSVEWSKP (79 aa)).

This sequence belongs to the eIF-3 subunit G family. Component of the eukaryotic translation initiation factor 3 (eIF-3) complex. The eIF-3 complex interacts with pix.

Its subcellular location is the cytoplasm. Its function is as follows. RNA-binding component of the eukaryotic translation initiation factor 3 (eIF-3) complex, which is involved in protein synthesis of a specialized repertoire of mRNAs and, together with other initiation factors, stimulates binding of mRNA and methionyl-tRNAi to the 40S ribosome. The eIF-3 complex specifically targets and initiates translation of a subset of mRNAs involved in cell proliferation. This subunit can bind 18S rRNA. This is Eukaryotic translation initiation factor 3 subunit G-2 from Drosophila grimshawi (Hawaiian fruit fly).